Consider the following 560-residue polypeptide: Zorya protein ZorC (560 aa).

Component of antiviral defense system Zorya type I, composed of ZorA, ZorB, ZorC and ZorD. Expression of Zorya type I in E.coli (strain MG1655) confers 10,000-fold resistance to phage SECphi27, 100-fold resistance to lambda, and 10-fold resistance to T7. While most T7 infected Zorya-containing cells undergo abortive infection, a minority produce viable phage progeny. These eventually accumulate to a high multiplicity of infection, leading to culture collapse by 2 hours after initial infection. ZorA and ZorB probably assemble in the cell inner membrane and exert their effect there. The polypeptide is Zorya protein ZorC (Escherichia coli O139:H28 (strain E24377A / ETEC)).